The following is a 440-amino-acid chain: Tetratricopeptide repeat protein 5 (440 aa).

TPR repeat units follow at residues Glu7–Leu61, Ala68–Leu98, Val103–Leu130, Lys136–Met174, and Gly179–Val216. A Nuclear export signal motif is present at residues Leu13–Tyr24. Ser203 is subject to Phosphoserine; by ATM. Phosphoserine; by CHEK2 is present on Ser221. Residues Pro224–Leu253 form a TPR 6 repeat. The tract at residues Lys285–Lys287 is mediates interaction with 28S rRNA of ribosome-coding tubulin.

Interacts with JMY and p300/EP300; the interaction occurs in the nucleus and augments the association between JMY and p300/EP300 in response to DNA damage. Interacts with PRMT5; the interaction is DNA damage-dependent and promotes PRMT5 interaction with p53/TP53 and subsequent methylation. Forms a complex with HSF1 and p300/EP300; these interactions augment chromatin-bound HSF1 and p300/EP300 histone acetyltransferase activity, resulting in enhanced heat-shock-responsive transcription. Interacts with JMY; the interaction occurs in the cytoplasm and results in the inhibition of JYM's nucleation activity. Interacts with ribosome-coding tubulin (via 60S subunit 28S rRNA and protein uL24/RPL26) and the N-terminal of nascent tubulin polypeptide (via alpha-tubulin MREC motif and beta-tubulin MREI motif); these interactions result in tubulin mRNA-targeted degradation. Interacts with ATP5F1B; the interaction occurs in the mitochondria and results in ATP production decrease. Interacts with p53/TP53; the interaction occurs in the mitochondria and results in increased apoptosis. Phosphorylation by ATM kinase induces nuclear accumulation while interfering with nuclear export, and phosphorylation by CHEK2 kinase enhances nuclear stability. As to expression, expressed in heart, brain, spleen, lung, liver, skeletal muscle, kidney and testis.

The protein localises to the nucleus. The protein resides in the cytoplasm. It is found in the cytoplasmic vesicle. It localises to the mitochondrion matrix. Cofactor involved in the regulation of various cellular mechanisms such as actin regulation, autophagy, chromatin regulation and DNA repair. In physiological conditions, interacts with cofactor JMY in the cytoplasm which prevents JMY's actin nucleation activity and ability to activate the Arp2/3 complex. Acts as a negative regulator of nutrient stress-induced autophagy by inhibiting JMY's interaction with MAP1LC3B, thereby preventing autophagosome formation. Involves in tubulin autoregulation by promoting its degradation in response to excess soluble tubulin. To do so, associates with the active ribosome near the ribosome exit tunnel and with nascent tubulin polypeptides early during their translation, triggering tubulin mRNA-targeted degradation. Following DNA damage, phosphorylated by DNA damage responsive protein kinases ATM and CHEK2, leading to its nuclear accumulation and stability. Nuclear TTC5/STRAP promotes the assembly of a stress-responsive p53/TP53 coactivator complex, which includes the coactivators JMY and p300, thereby increasing p53/TP53-dependent transcription and apoptosis. Also recruits arginine methyltransferase PRMT5 to p53/TP53 when DNA is damaged, allowing PRMT5 to methylate p53/TP53. In DNA stress conditions, also prevents p53/TP53 degradation by E3 ubiquitin ligase MDM2. Upon heat-shock stress, forms a chromatin-associated complex with heat-shock factor 1 HSF1 and p300/EP300 to stimulate heat-shock-responsive transcription, thereby increasing cell survival. Mitochondrial TTC5/STRAP interacts with ATP synthase subunit beta ATP5F1B which decreased ATP synthase activity and lowers mitochondrial ATP production, thereby regulating cellular respiration and mitochondrial-dependent apoptosis. Mitochondrial TTC5/STRAP also regulates p53/TP53-mediated apoptosis. The sequence is that of Tetratricopeptide repeat protein 5 from Mus musculus (Mouse).